The chain runs to 759 residues: Protein YdeP (759 aa).

Residues Cys49 and Cys52 each contribute to the [4Fe-4S] cluster site.

It belongs to the prokaryotic molybdopterin-containing oxidoreductase family. [4Fe-4S] cluster is required as a cofactor. It depends on Mo-bis(molybdopterin guanine dinucleotide) as a cofactor.

Its function is as follows. Probably involved in acid resistance. This is Protein YdeP (ydeP) from Shigella flexneri.